A 352-amino-acid polypeptide reads, in one-letter code: 3-isopropylmalate dehydrogenase (352 aa).

76 to 89 provides a ligand contact to NAD(+); sequence GYKWENLPHDKKPE. 4 residues coordinate substrate: arginine 96, arginine 106, arginine 134, and aspartate 220. The Mg(2+) site is built by aspartate 220, aspartate 244, and aspartate 248. 277-289 serves as a coordination point for NAD(+); it reads GSAPDIAGQNKAN.

The protein belongs to the isocitrate and isopropylmalate dehydrogenases family. LeuB type 1 subfamily. As to quaternary structure, homodimer. Mg(2+) is required as a cofactor. It depends on Mn(2+) as a cofactor.

The protein resides in the cytoplasm. It catalyses the reaction (2R,3S)-3-isopropylmalate + NAD(+) = 4-methyl-2-oxopentanoate + CO2 + NADH. It functions in the pathway amino-acid biosynthesis; L-leucine biosynthesis; L-leucine from 3-methyl-2-oxobutanoate: step 3/4. In terms of biological role, catalyzes the oxidation of 3-carboxy-2-hydroxy-4-methylpentanoate (3-isopropylmalate) to 3-carboxy-4-methyl-2-oxopentanoate. The product decarboxylates to 4-methyl-2 oxopentanoate. The sequence is that of 3-isopropylmalate dehydrogenase from Chlorobaculum tepidum (strain ATCC 49652 / DSM 12025 / NBRC 103806 / TLS) (Chlorobium tepidum).